A 185-amino-acid chain; its full sequence is ATP synthase subunit b (185 aa).

The helical transmembrane segment at 27-47 threads the bilayer; the sequence is GALIWKGLNILAFLGIVYYFG.

It belongs to the ATPase B chain family. In terms of assembly, F-type ATPases have 2 components, F(1) - the catalytic core - and F(0) - the membrane proton channel. F(1) has five subunits: alpha(3), beta(3), gamma(1), delta(1), epsilon(1). F(0) has three main subunits: a(1), b(2) and c(10-14). The alpha and beta chains form an alternating ring which encloses part of the gamma chain. F(1) is attached to F(0) by a central stalk formed by the gamma and epsilon chains, while a peripheral stalk is formed by the delta and b chains.

It localises to the cell inner membrane. Functionally, f(1)F(0) ATP synthase produces ATP from ADP in the presence of a proton or sodium gradient. F-type ATPases consist of two structural domains, F(1) containing the extramembraneous catalytic core and F(0) containing the membrane proton channel, linked together by a central stalk and a peripheral stalk. During catalysis, ATP synthesis in the catalytic domain of F(1) is coupled via a rotary mechanism of the central stalk subunits to proton translocation. In terms of biological role, component of the F(0) channel, it forms part of the peripheral stalk, linking F(1) to F(0). This chain is ATP synthase subunit b, found in Aquifex aeolicus (strain VF5).